Consider the following 505-residue polypeptide: Autophagy-related protein 18 (505 aa).

2 WD repeats span residues 246–286 (AHKG…KLYQ) and 291–330 (TYPT…EERT). The short motif at 287 to 291 (FRRGT) is the L/FRRG motif element. Residues 328–380 (ERTSGGADDADSDDSGNENDGDNNSVGNGDVSSLLSDNDIESTREPYVDASRK) are disordered. Positions 335–348 (DDADSDDSGNENDG) are enriched in acidic residues. The span at 349–360 (DNNSVGNGDVSS) shows a compositional bias: low complexity. Positions 368-379 (ESTREPYVDASR) are enriched in basic and acidic residues.

It belongs to the WD repeat PROPPIN family. As to quaternary structure, component of the PI(3,5)P2 regulatory complex.

It localises to the preautophagosomal structure membrane. The protein resides in the vacuole membrane. Its subcellular location is the endosome membrane. Its function is as follows. The PI(3,5)P2 regulatory complex regulates both the synthesis and turnover of phosphatidylinositol 3,5-bisphosphate (PtdIns(3,5)P2). Necessary for proper vacuole morphology. Plays an important role in osmotically-induced vacuole fragmentation. Required for cytoplasm to vacuole transport (Cvt) vesicle formation, pexophagy and starvation-induced autophagy. Involved in correct ATG9 trafficking to the pre-autophagosomal structure. Might also be involved in premeiotic DNA replication. This is Autophagy-related protein 18 (ATG18) from Candida glabrata (strain ATCC 2001 / BCRC 20586 / JCM 3761 / NBRC 0622 / NRRL Y-65 / CBS 138) (Yeast).